A 184-amino-acid chain; its full sequence is Large ribosomal subunit protein uL18 (184 aa).

The protein belongs to the universal ribosomal protein uL18 family. As to quaternary structure, part of the 50S ribosomal subunit. Contacts the 5S and 23S rRNAs.

This is one of the proteins that bind and probably mediate the attachment of the 5S RNA into the large ribosomal subunit, where it forms part of the central protuberance. In Natronomonas pharaonis (strain ATCC 35678 / DSM 2160 / CIP 103997 / JCM 8858 / NBRC 14720 / NCIMB 2260 / Gabara) (Halobacterium pharaonis), this protein is Large ribosomal subunit protein uL18.